Consider the following 285-residue polypeptide: Putative cytochrome c peroxidase, mitochondrial (285 aa).

Residue His-37 is the Proton acceptor of the active site. Position 161 (His-161) interacts with heme b. Trp-177 functions as the Tryptophan radical intermediate in the catalytic mechanism.

This sequence belongs to the peroxidase family. Cytochrome c peroxidase subfamily. Forms a one-to-one complex with cytochrome c. The cofactor is heme b.

The protein resides in the mitochondrion matrix. Its subcellular location is the mitochondrion intermembrane space. The catalysed reaction is 2 Fe(II)-[cytochrome c] + H2O2 + 2 H(+) = 2 Fe(III)-[cytochrome c] + 2 H2O. In terms of biological role, destroys radicals which are normally produced within the cells and which are toxic to biological systems. The protein is Putative cytochrome c peroxidase, mitochondrial of Yarrowia lipolytica (strain CLIB 122 / E 150) (Yeast).